A 262-amino-acid chain; its full sequence is uncharacterized protein (262 aa).

3 consecutive transmembrane segments (helical) span residues 4 to 24 (LIVFLSMLSSSVAGFFGRFLG), 28 to 48 (VSRFNLIIFLILLVFSICLFR), and 62 to 82 (CYLALVCQISLFLVLLRSHIL). A coiled-coil region spans residues 152–181 (EREARAQEHDRISAEVETITSACENLEAAM).

The protein resides in the mitochondrion membrane. This is an uncharacterized protein from Arabidopsis thaliana (Mouse-ear cress).